A 742-amino-acid polypeptide reads, in one-letter code: Cullin-2 (742 aa).

One can recognise a Cullin neddylation domain in the interval 672-734 (DRRYAIDAAL…RDYLERDTDN (63 aa)). K686 participates in a covalent cross-link: Glycyl lysine isopeptide (Lys-Gly) (interchain with G-Cter in NEDD8).

This sequence belongs to the cullin family. As to quaternary structure, interacts with SKIP17 and FBW2/SKIP18. Post-translationally, neddylated; which enhances the ubiquitination activity of E3 ubiquitin-protein ligase complexes.

In terms of biological role, core component of multiple SCF (SKP1-CUL1-F-box protein) E3 ubiquitin-protein ligase complexes. Involved in ubiquitination and subsequent proteasomal degradation of target proteins. The polypeptide is Cullin-2 (CUL2) (Arabidopsis thaliana (Mouse-ear cress)).